The primary structure comprises 654 residues: Pyoverdine export ATP-binding/permease protein PvdT (654 aa).

The ABC transporter domain maps to 6–245 (IELCDIRKAY…AHKGIQAEEL (240 aa)). ATP is bound at residue 43 to 50 (GASGSGKS). 4 helical membrane passes run 282-302 (ALTL…LAVG), 529-549 (LSLM…IGVM), 584-604 (AIML…VVGA), and 614-634 (AFAL…GVVF).

This sequence belongs to the ABC transporter superfamily. Macrolide exporter (TC 3.A.1.122) family. Part of the tripartite efflux system PvdRT-OpmQ, which is composed of an inner membrane component with both ATPase and permease domains, PvdT, a periplasmic membrane fusion protein, PvdR, and an outer membrane component, OpmQ.

The protein localises to the cell inner membrane. Has a basal ATPase activity that is stimulated by PvdR. In vitro, interaction with PVD influences the affinity of PvdT to PvdR. In terms of biological role, part of the tripartite efflux system PvdRT-OpmQ required for the secretion into the extracellular milieu of the siderophore pyoverdine (PVD), which is involved in iron acquisition. This subunit binds PVD and drives its secretion by hydrolyzing ATP. The system is responsible for export of newly synthesized PVD after the final steps of biosynthesis have taken place in the periplasm. It is also responsible for recycling of PVD after internalization of ferri-PVD into the periplasm by the outer-membrane receptor FpvA and release of iron from PVD, thus making PVD available for new cycles of iron uptake. Contributes to resistance against ampicillin. The chain is Pyoverdine export ATP-binding/permease protein PvdT from Pseudomonas putida (strain ATCC 47054 / DSM 6125 / CFBP 8728 / NCIMB 11950 / KT2440).